Reading from the N-terminus, the 185-residue chain is Large ribosomal subunit protein uL16m (185 aa).

It belongs to the universal ribosomal protein uL16 family.

The protein localises to the mitochondrion. The sequence is that of Large ribosomal subunit protein uL16m (RPL16) from Oryza sativa subsp. japonica (Rice).